The chain runs to 202 residues: Putative pituitary tumor-transforming gene 3 protein (202 aa).

The D-box motif lies at 61 to 64 (RKAL). A disordered region spans residues 67 to 92 (VNRATEKSVKTNGPLKQKQPSFSAKK). The short motif at 163-173 (PPLPLKMPSPP) is the SH3-binding element.

The protein belongs to the securin family.

It localises to the cytoplasm. The protein localises to the nucleus. This is Putative pituitary tumor-transforming gene 3 protein (PTTG3) from Pongo pygmaeus (Bornean orangutan).